Consider the following 484-residue polypeptide: Auxin transporter-like protein 2 (484 aa).

At 1–59 (MLPQKQGEEAIVSSFNETDQQEGVVGREEEVEDHSFSVKNFLWHGGSVWDAWFSCASNQ) the chain is on the cytoplasmic side. Residues 60–77 (VAQVLLTLPYSFSQLGML) form a helical membrane-spanning segment. Over 78–79 (SG) the chain is Extracellular. The helical transmembrane segment at 80–100 (ILLQVFYGILGSWTAYLISVL) threads the bilayer. At 101–135 (YVEYRSRKEKENVNFKNHVIQWFEVLDGLLGPYWK) the chain is on the cytoplasmic side. A helical transmembrane segment spans residues 136 to 156 (ALGLAFNCTFLLFGSVIQLIA). The Extracellular portion of the chain corresponds to 157 to 172 (CASNIYYINDNLDKRT). Residues 173-193 (WTYIFGACCATTVFIPSFHNY) traverse the membrane as a helical segment. The Cytoplasmic portion of the chain corresponds to 194–196 (RIW). A helical transmembrane segment spans residues 197–217 (SFLGLGMTTYTAWYLTIASIV). The Extracellular segment spans residues 218-232 (HGQAENVTHTGPKKL). A glycan (N-linked (GlcNAc...) asparagine) is linked at N223. A helical transmembrane segment spans residues 233–253 (VLYFTGATNILYTFGGHAVTV). Residues 254-266 (EIMHAMWKPQKFK) are Cytoplasmic-facing. A helical transmembrane segment spans residues 267–287 (YIYLMATLYVFTLTIPSATAV). The Extracellular segment spans residues 288–314 (YWAFGDELLNHSNAFSLLPKNGWRDGA). N297 carries an N-linked (GlcNAc...) asparagine glycan. Residues 315 to 335 (VILMLIHQFITFGFACTPLYF) form a helical membrane-spanning segment. The Cytoplasmic segment spans residues 336–356 (VWEKVIGMHDTRSICLRALAR). The helical transmembrane segment at 357 to 377 (LPVVIPIWFLAIIFPFFGPIN) threads the bilayer. Residue S378 is a topological domain, extracellular. Residues 379-399 (AVGALLVSFTVYIIPSAAHML) traverse the membrane as a helical segment. The Cytoplasmic segment spans residues 400-425 (TYRKASARKNAAEKPPFFMPSWTAMY). A helical transmembrane segment spans residues 426–446 (IFNAFIVIWVLVVGFGFGGWA). Residues 447–484 (SMTNFIRQIDTFGLFAKCYQCKPPPVMAAAPPPHALHH) are Extracellular-facing.

It belongs to the amino acid/polyamine transporter 2 family. Amino acid/auxin permease (AAAP) (TC 2.A.18.1) subfamily. Shoots and roots of nodulating plants. Higher levels in roots, flowers and stems, lower in nodules, leaves, petioles and shoot apices.

Its subcellular location is the cell membrane. Functionally, carrier protein involved in proton-driven auxin influx. Mediates the formation of auxin gradient from developing leaves (site of auxin biosynthesis) to tips by contributing to the loading of auxin in vascular tissues and facilitating acropetal (base to tip) auxin transport within inner tissues of the root apex, and basipetal (tip to base) auxin transport within outer tissues of the root apex. May be involved in lateral roots and nodules formation. The protein is Auxin transporter-like protein 2 (LAX2) of Medicago truncatula (Barrel medic).